Here is a 150-residue protein sequence, read N- to C-terminus: Cell division protein SepF (150 aa).

Residues 26-45 (DREEIPEEHESKDRTAYQSK) form a disordered region.

Belongs to the SepF family. As to quaternary structure, homodimer. Interacts with FtsZ.

It localises to the cytoplasm. Cell division protein that is part of the divisome complex and is recruited early to the Z-ring. Probably stimulates Z-ring formation, perhaps through the cross-linking of FtsZ protofilaments. Its function overlaps with FtsA. The polypeptide is Cell division protein SepF (Bacillus licheniformis (strain ATCC 14580 / DSM 13 / JCM 2505 / CCUG 7422 / NBRC 12200 / NCIMB 9375 / NCTC 10341 / NRRL NRS-1264 / Gibson 46)).